The chain runs to 287 residues: Nucleotide-binding protein GM21_3387 (287 aa).

Residue 8–15 (GLSGSGKS) participates in ATP binding. Position 59–62 (59–62 (DIRS)) interacts with GTP.

The protein belongs to the RapZ-like family.

Functionally, displays ATPase and GTPase activities. The chain is Nucleotide-binding protein GM21_3387 from Geobacter sp. (strain M21).